Consider the following 217-residue polypeptide: Peptide methionine sulfoxide reductase MsrA (217 aa).

The active site involves Cys56.

It belongs to the MsrA Met sulfoxide reductase family.

The catalysed reaction is L-methionyl-[protein] + [thioredoxin]-disulfide + H2O = L-methionyl-(S)-S-oxide-[protein] + [thioredoxin]-dithiol. It catalyses the reaction [thioredoxin]-disulfide + L-methionine + H2O = L-methionine (S)-S-oxide + [thioredoxin]-dithiol. In terms of biological role, has an important function as a repair enzyme for proteins that have been inactivated by oxidation. Catalyzes the reversible oxidation-reduction of methionine sulfoxide in proteins to methionine. This Corynebacterium melassecola protein is Peptide methionine sulfoxide reductase MsrA.